The primary structure comprises 478 residues: Glycogen synthase (478 aa).

Residue K15 coordinates ADP-alpha-D-glucose.

It belongs to the glycosyltransferase 1 family. Bacterial/plant glycogen synthase subfamily.

It carries out the reaction [(1-&gt;4)-alpha-D-glucosyl](n) + ADP-alpha-D-glucose = [(1-&gt;4)-alpha-D-glucosyl](n+1) + ADP + H(+). It functions in the pathway glycan biosynthesis; glycogen biosynthesis. Functionally, synthesizes alpha-1,4-glucan chains using ADP-glucose. The protein is Glycogen synthase of Enterobacter sp. (strain 638).